The primary structure comprises 319 residues: MAICPELAQTDKSALANLSDETETLKNSTDEVQTSSSFSSSGGRQSSPLTSGSKLEREKQTPSLEQGDTQSELLDYKNYEKKLSKKWINYLKLKDSNFERHQPDTKLPTEITRVSDEELNALQSYCTMKINLIHRRGDSKKKTSSRHKKLHLGLDVEASERDAFSCTVPDELLNRIYFKNMRTTPKQEAAAKQHISYQCPYCNRKRAELALSAFLKQKKTLLESFLLQERIDEHLHTKDFLTRIGEAHQDFPRLSDDPRIIWKRLTEKSHIRYSGFERSETEQKLQRDGNSACHLPFSLPFLKRLTLIKPELVIVNDNV.

A disordered region spans residues 21-70; the sequence is ETETLKNSTDEVQTSSSFSSSGGRQSSPLTSGSKLEREKQTPSLEQGDTQ. Polar residues predominate over residues 25 to 34; it reads LKNSTDEVQT. Positions 35 to 51 are enriched in low complexity; the sequence is SSSFSSSGGRQSSPLTS. The segment covering 61 to 70 has biased composition (polar residues); it reads TPSLEQGDTQ.

This is an uncharacterized protein from Homo sapiens (Human).